Here is a 111-residue protein sequence, read N- to C-terminus: UPF0145 protein BTH_I2656 (111 aa).

It belongs to the UPF0145 family.

This chain is UPF0145 protein BTH_I2656, found in Burkholderia thailandensis (strain ATCC 700388 / DSM 13276 / CCUG 48851 / CIP 106301 / E264).